The primary structure comprises 555 residues: MYSDKKNILQLVALLEAHGITKVVLCPGSRNAPIVHTLSTHPGFTCYAMTDERSAGYFAIGLALNGGHPAAVCCTSGTALLNLHPAVAEAYYQNIPLVVISADRPAAWIGQMAGQTLPQPGVFQTLVKKSVNLPEIQTEEDEWYCNRLVNEALLETNHHGKGPVHINIPISEPLFQFTVESLPEVRVITRYQGLNVYDRDYNDLIERLNRYQKRMIIVGQMNLIYLFEKRHTKLLYKHFVWLTEHIGNQTVPGIPVKNFDAALYAMPEEKTGQMTPELLITYGGHVVSKRLKKYLRQHPPKEHWHVSADGEVVDLYGSLTTVIEMDPFEFLEKIAPLLDNRVPEYPRVWENYCKTIPEPEFGYSEMSAIGALIKALPESCALHLANSSVIRYAQLYQVPSTIEVCCNRGTSGIEGSLSTAVGYAAGSDKLNFIVIGDLSFFYDMNALWNINVRPNLRILLLNNGGGEIFHTLPGLDMSGTSHKYITAVHKTSAKGWAEERGFLYQRVENEEQLAEAMKTFTQPEAMEQPVLMEVFSNKNKDARILKDYYHQLKQK.

It belongs to the TPP enzyme family. MenD subfamily. In terms of assembly, homodimer. Mg(2+) serves as cofactor. Mn(2+) is required as a cofactor. Requires thiamine diphosphate as cofactor.

It carries out the reaction isochorismate + 2-oxoglutarate + H(+) = 5-enolpyruvoyl-6-hydroxy-2-succinyl-cyclohex-3-ene-1-carboxylate + CO2. It functions in the pathway quinol/quinone metabolism; 1,4-dihydroxy-2-naphthoate biosynthesis; 1,4-dihydroxy-2-naphthoate from chorismate: step 2/7. Its pathway is quinol/quinone metabolism; menaquinone biosynthesis. In terms of biological role, catalyzes the thiamine diphosphate-dependent decarboxylation of 2-oxoglutarate and the subsequent addition of the resulting succinic semialdehyde-thiamine pyrophosphate anion to isochorismate to yield 2-succinyl-5-enolpyruvyl-6-hydroxy-3-cyclohexene-1-carboxylate (SEPHCHC). The sequence is that of 2-succinyl-5-enolpyruvyl-6-hydroxy-3-cyclohexene-1-carboxylate synthase from Bacteroides thetaiotaomicron (strain ATCC 29148 / DSM 2079 / JCM 5827 / CCUG 10774 / NCTC 10582 / VPI-5482 / E50).